The sequence spans 142 residues: Phosphoribosyl-AMP cyclohydrolase (142 aa).

Mg(2+) is bound at residue D92. A Zn(2+)-binding site is contributed by C93. 2 residues coordinate Mg(2+): D94 and D96. Residues C109 and C116 each contribute to the Zn(2+) site.

It belongs to the PRA-CH family. Homodimer. The cofactor is Mg(2+). Requires Zn(2+) as cofactor.

The protein localises to the cytoplasm. It carries out the reaction 1-(5-phospho-beta-D-ribosyl)-5'-AMP + H2O = 1-(5-phospho-beta-D-ribosyl)-5-[(5-phospho-beta-D-ribosylamino)methylideneamino]imidazole-4-carboxamide. It participates in amino-acid biosynthesis; L-histidine biosynthesis; L-histidine from 5-phospho-alpha-D-ribose 1-diphosphate: step 3/9. In terms of biological role, catalyzes the hydrolysis of the adenine ring of phosphoribosyl-AMP. This is Phosphoribosyl-AMP cyclohydrolase from Alcanivorax borkumensis (strain ATCC 700651 / DSM 11573 / NCIMB 13689 / SK2).